The primary structure comprises 153 residues: UPF0266 membrane protein YE1773 (153 aa).

3 helical membrane passes run 6–26 (IVLI…EFIM), 45–65 (IDCA…VMAN), and 67–87 (EPLT…LSYI).

Belongs to the UPF0266 family.

The protein resides in the cell inner membrane. The sequence is that of UPF0266 membrane protein YE1773 from Yersinia enterocolitica serotype O:8 / biotype 1B (strain NCTC 13174 / 8081).